The following is a 440-amino-acid chain: Ribosomal protein uS12 methylthiotransferase RimO (440 aa).

Positions 6-116 (PKVGFVSLGC…VVSAVHEVVP (111 aa)) constitute an MTTase N-terminal domain. Residues Cys-15, Cys-51, Cys-80, Cys-149, Cys-153, and Cys-156 each coordinate [4Fe-4S] cluster. Positions 135–374 (LTPRHYAYLK…AHQQAISSAR (240 aa)) constitute a Radical SAM core domain. The 65-residue stretch at 376–440 (QAKIGLEMDV…DEYDMWGELV (65 aa)) folds into the TRAM domain.

This sequence belongs to the methylthiotransferase family. RimO subfamily. It depends on [4Fe-4S] cluster as a cofactor.

The protein localises to the cytoplasm. It carries out the reaction L-aspartate(89)-[ribosomal protein uS12]-hydrogen + (sulfur carrier)-SH + AH2 + 2 S-adenosyl-L-methionine = 3-methylsulfanyl-L-aspartate(89)-[ribosomal protein uS12]-hydrogen + (sulfur carrier)-H + 5'-deoxyadenosine + L-methionine + A + S-adenosyl-L-homocysteine + 2 H(+). Catalyzes the methylthiolation of an aspartic acid residue of ribosomal protein uS12. The polypeptide is Ribosomal protein uS12 methylthiotransferase RimO (Ectopseudomonas mendocina (strain ymp) (Pseudomonas mendocina)).